The following is a 113-amino-acid chain: DNA-directed RNA polymerase subunit Rpo4 (113 aa).

It belongs to the eukaryotic RPB4 RNA polymerase subunit family. Part of the 13-subunit RNA polymerase complex. Forms a stalk with Rpo7 that extends from the main structure.

The protein resides in the cytoplasm. The enzyme catalyses RNA(n) + a ribonucleoside 5'-triphosphate = RNA(n+1) + diphosphate. In terms of biological role, DNA-dependent RNA polymerase (RNAP) catalyzes the transcription of DNA into RNA using the four ribonucleoside triphosphates as substrates. This subunit is less well bound than the others. The polypeptide is DNA-directed RNA polymerase subunit Rpo4 (Saccharolobus solfataricus (strain ATCC 35092 / DSM 1617 / JCM 11322 / P2) (Sulfolobus solfataricus)).